The following is an 820-amino-acid chain: Serine/threonine-protein phosphatase 4 regulatory subunit 3B (820 aa).

The WH1 domain occupies 1–100; it reads MSDTRRRVKV…DEIWEKICQV (100 aa). S117 and S663 each carry phosphoserine. Residues 687–820 are disordered; that stretch reads EDDDEEGKAV…SPRKRPRLGS (134 aa). The span at 701–732 shows a compositional bias: basic and acidic residues; the sequence is EKSKTEDDFPDSYEKFMETKKAKESEDKENLP. Polar residues predominate over residues 744 to 789; sequence FSHSPSATNGTNSTNSKSVVSQTTPASSNVASSKTTSLATSVTATK. Over residues 798-809 the composition is skewed to acidic residues; the sequence is YPDDEEEDEEEE. A Phosphoserine modification is found at S811.

Belongs to the SMEK family. As to quaternary structure, serine/threonine-protein phosphatase 4 (PP4) occurs in different assemblies of the catalytic and one or more regulatory subunits. Component of the PP4 complex PPP4C-PPP4R2-PPP4R3B.

Its subcellular location is the cytoplasm. The protein resides in the cytoskeleton. The protein localises to the microtubule organizing center. It localises to the centrosome. It is found in the nucleus. Functionally, regulatory subunit of serine/threonine-protein phosphatase 4 (PP4). May regulate the activity of PPP4C at centrosomal microtubule organizing centers. The sequence is that of Serine/threonine-protein phosphatase 4 regulatory subunit 3B from Mus musculus (Mouse).